A 389-amino-acid chain; its full sequence is S-adenosylmethionine synthase (389 aa).

His19 is a binding site for ATP. Asp21 is a binding site for Mg(2+). Glu47 lines the K(+) pocket. Residues Glu60 and Gln103 each coordinate L-methionine. The segment at 103 to 113 is flexible loop; it reads QSVDIAQGVDR. ATP is bound by residues 168 to 170, 234 to 235, Asp243, 249 to 250, Ala266, and Lys270; these read DGK, RF, and RK. Asp243 contacts L-methionine. An L-methionine-binding site is contributed by Lys274.

It belongs to the AdoMet synthase family. In terms of assembly, homotetramer; dimer of dimers. It depends on Mg(2+) as a cofactor. K(+) serves as cofactor.

It localises to the cytoplasm. The enzyme catalyses L-methionine + ATP + H2O = S-adenosyl-L-methionine + phosphate + diphosphate. Its pathway is amino-acid biosynthesis; S-adenosyl-L-methionine biosynthesis; S-adenosyl-L-methionine from L-methionine: step 1/1. Its function is as follows. Catalyzes the formation of S-adenosylmethionine (AdoMet) from methionine and ATP. The overall synthetic reaction is composed of two sequential steps, AdoMet formation and the subsequent tripolyphosphate hydrolysis which occurs prior to release of AdoMet from the enzyme. The sequence is that of S-adenosylmethionine synthase from Maridesulfovibrio salexigens (strain ATCC 14822 / DSM 2638 / NCIMB 8403 / VKM B-1763) (Desulfovibrio salexigens).